The sequence spans 62 residues: Photosystem II reaction center protein Z (62 aa).

2 helical membrane-spanning segments follow: residues 8-28 and 41-61; these read SVFA…VVLA and FSGA…NSLI.

The protein belongs to the PsbZ family. PSII is composed of 1 copy each of membrane proteins PsbA, PsbB, PsbC, PsbD, PsbE, PsbF, PsbH, PsbI, PsbJ, PsbK, PsbL, PsbM, PsbT, PsbY, PsbZ, Psb30/Ycf12, at least 3 peripheral proteins of the oxygen-evolving complex and a large number of cofactors. It forms dimeric complexes.

The protein resides in the plastid. Its subcellular location is the chloroplast thylakoid membrane. Functionally, may control the interaction of photosystem II (PSII) cores with the light-harvesting antenna, regulates electron flow through the 2 photosystem reaction centers. PSII is a light-driven water plastoquinone oxidoreductase, using light energy to abstract electrons from H(2)O, generating a proton gradient subsequently used for ATP formation. This chain is Photosystem II reaction center protein Z, found in Psilotum nudum (Whisk fern).